A 288-amino-acid chain; its full sequence is Fructose-bisphosphate aldolase (288 aa).

Serine 49 contributes to the D-glyceraldehyde 3-phosphate binding site. The active-site Proton donor is aspartate 84. Zn(2+)-binding residues include histidine 85, aspartate 105, glutamate 135, and histidine 177. Glycine 178 is a dihydroxyacetone phosphate binding site. Histidine 206 lines the Zn(2+) pocket. Dihydroxyacetone phosphate-binding positions include 207–209 (GGS) and 228–231 (NINT).

The protein belongs to the class II fructose-bisphosphate aldolase family. As to quaternary structure, homodimer. Zn(2+) serves as cofactor.

It carries out the reaction beta-D-fructose 1,6-bisphosphate = D-glyceraldehyde 3-phosphate + dihydroxyacetone phosphate. The protein operates within carbohydrate degradation; glycolysis; D-glyceraldehyde 3-phosphate and glycerone phosphate from D-glucose: step 4/4. Its function is as follows. Catalyzes the aldol condensation of dihydroxyacetone phosphate (DHAP or glycerone-phosphate) with glyceraldehyde 3-phosphate (G3P) to form fructose 1,6-bisphosphate (FBP) in gluconeogenesis and the reverse reaction in glycolysis. The protein is Fructose-bisphosphate aldolase (fba) of Mycoplasma pneumoniae (strain ATCC 29342 / M129 / Subtype 1) (Mycoplasmoides pneumoniae).